The following is a 368-amino-acid chain: Putative phospho-2-dehydro-3-deoxyheptonate aldolase (368 aa).

The protein belongs to the class-I DAHP synthase family.

The catalysed reaction is D-erythrose 4-phosphate + phosphoenolpyruvate + H2O = 7-phospho-2-dehydro-3-deoxy-D-arabino-heptonate + phosphate. The protein operates within metabolic intermediate biosynthesis; chorismate biosynthesis; chorismate from D-erythrose 4-phosphate and phosphoenolpyruvate: step 1/7. Stereospecific condensation of phosphoenolpyruvate (PEP) and D-erythrose-4-phosphate (E4P) giving rise to 3-deoxy-D-arabino-heptulosonate-7-phosphate (DAHP). The protein is Putative phospho-2-dehydro-3-deoxyheptonate aldolase of Schizosaccharomyces pombe (strain 972 / ATCC 24843) (Fission yeast).